Consider the following 180-residue polypeptide: Ribosome maturation factor RimM (180 aa).

The 73-residue stretch at 108 to 180 (PDEYYWVDLE…LIVVDWDPDF (73 aa)) folds into the PRC barrel domain.

The protein belongs to the RimM family. Binds ribosomal protein uS19.

Its subcellular location is the cytoplasm. Its function is as follows. An accessory protein needed during the final step in the assembly of 30S ribosomal subunit, possibly for assembly of the head region. Essential for efficient processing of 16S rRNA. May be needed both before and after RbfA during the maturation of 16S rRNA. It has affinity for free ribosomal 30S subunits but not for 70S ribosomes. The chain is Ribosome maturation factor RimM from Xanthomonas euvesicatoria pv. vesicatoria (strain 85-10) (Xanthomonas campestris pv. vesicatoria).